Here is a 55-residue protein sequence, read N- to C-terminus: Large ribosomal subunit protein bL33 (55 aa).

Belongs to the bacterial ribosomal protein bL33 family.

This is Large ribosomal subunit protein bL33 from Buchnera aphidicola subsp. Acyrthosiphon pisum (strain 5A).